The sequence spans 236 residues: Uridylate kinase (236 aa).

ATP is bound at residue 8 to 11 (KLSG). Residue glycine 51 coordinates UMP. Residues glycine 52 and arginine 56 each contribute to the ATP site. UMP is bound by residues aspartate 71 and 133–140 (TGRPFFTT). The ATP site is built by asparagine 161, phenylalanine 167, and aspartate 170.

Belongs to the UMP kinase family. Homohexamer.

It is found in the cytoplasm. The catalysed reaction is UMP + ATP = UDP + ADP. It participates in pyrimidine metabolism; CTP biosynthesis via de novo pathway; UDP from UMP (UMPK route): step 1/1. Inhibited by UTP. In terms of biological role, catalyzes the reversible phosphorylation of UMP to UDP. The polypeptide is Uridylate kinase (Mesomycoplasma hyopneumoniae (strain 232) (Mycoplasma hyopneumoniae)).